Consider the following 142-residue polypeptide: Small ribosomal subunit protein uS9c (142 aa).

This sequence belongs to the universal ribosomal protein uS9 family.

It localises to the plastid. The protein resides in the chloroplast. In Stigeoclonium helveticum (Green alga), this protein is Small ribosomal subunit protein uS9c (rps9).